The following is an 866-amino-acid chain: Thiamine diphosphate dependent-3-acetyloctanal synthase PigD (866 aa).

Residues 826 to 866 (KGWQRDPSDREALQERKDWAARQPESTSTSFDQGQNKEAIS) form a disordered region. A compositionally biased stretch (basic and acidic residues) spans 828-845 (WQRDPSDREALQERKDWA). The segment covering 849–866 (PESTSTSFDQGQNKEAIS) has biased composition (polar residues).

Belongs to the TPP enzyme family. Requires thiamine diphosphate as cofactor.

The enzyme catalyses (2E)-octenal + pyruvate + H(+) = (S)-3-acetyloctanal + CO2. It functions in the pathway antibiotic biosynthesis; prodigiosin biosynthesis. Involved in the biosynthesis of 2-methyl-3-n-amyl-pyrrole (MAP), one of the terminal products involved in the biosynthesis of the red antibiotic prodigiosin (Pig). Catalyzes the decarboxylation of pyruvate, followed by the modification of the resulting two-carbon fragment acetaldehyde at the C3 position of the 2-octenal (1,2-addition of acetaldehyde) giving 3-acetyloctanal. This Serratia sp. (strain ATCC 39006) (Prodigiosinella confusarubida) protein is Thiamine diphosphate dependent-3-acetyloctanal synthase PigD.